The chain runs to 429 residues: Glutamate-1-semialdehyde 2,1-aminomutase (429 aa).

The residue at position 267 (K267) is an N6-(pyridoxal phosphate)lysine.

Belongs to the class-III pyridoxal-phosphate-dependent aminotransferase family. HemL subfamily. Homodimer. The cofactor is pyridoxal 5'-phosphate.

The protein resides in the cytoplasm. It carries out the reaction (S)-4-amino-5-oxopentanoate = 5-aminolevulinate. The protein operates within porphyrin-containing compound metabolism; protoporphyrin-IX biosynthesis; 5-aminolevulinate from L-glutamyl-tRNA(Glu): step 2/2. The sequence is that of Glutamate-1-semialdehyde 2,1-aminomutase from Xanthomonas axonopodis pv. citri (strain 306).